The chain runs to 512 residues: MDLEADPWRVNSEENGNNISGSVWEPDNSSVNALKSYSADSLQQEANKRVNDDYLGVNIFSNGDNIVRGTASNVYQNDVLWDRPNIGSTTQETDIRGVNRFQATDTPQYAANDEYKNWVESVRKTYFPLAEDIVSVEEIPEREGLVFKHTNYLVKHLTPLPNTDPSDDRTVVRRYSDFDWLQDVLLRKYPFRMVPELPPKKIGSQNADPLFLAKRRKGLSRFINLVMKHPVLRSDDLVLTFLTVPTDLSGWRKQAHYDTTDEFTDKHISSSFMNLWRKEFSEQWNKADERIDIALDTWVKVTVLIERYEKRMKQVAHERKLLGQILNAIPDTTEALYPQSTATVSQINEGVGLIVEHLNSCADVIERENEEVDSGLSVRFKAFIDVIIALKGLFERYKMMAGNNIPQLQRRVEINQERLNTLESNPDVKGAEYDRVKQSISRDKRSILDQMNRSWLIRECILEEFTIFHETQFLITDCFQRWIEINLRYTNNNVDNWEKICKKLRDMPLQRH.

Residues 1–24 (MDLEADPWRVNSEENGNNISGSVW) are disordered. Positions 13-22 (EENGNNISGS) are enriched in low complexity. The PX domain maps to 130–248 (AEDIVSVEEI…LTFLTVPTDL (119 aa)). Residues arginine 174, serine 176, lysine 200, and arginine 215 each coordinate a 1,2-diacyl-sn-glycero-3-phospho-(1D-myo-inositol-3-phosphate).

It belongs to the sorting nexin family.

It localises to the cytoplasm. It is found in the membrane. In terms of biological role, required for vacuolar protein sorting. In Kluyveromyces lactis (strain ATCC 8585 / CBS 2359 / DSM 70799 / NBRC 1267 / NRRL Y-1140 / WM37) (Yeast), this protein is Sorting nexin MVP1 (MVP1).